Here is a 210-residue protein sequence, read N- to C-terminus: Outer-membrane lipoprotein LolB (210 aa).

An N-terminal signal peptide occupies residues 1–26; sequence MSKLKIDTKRRFSLLIALVLIISLSS. Cys27 is lipidated: N-palmitoyl cysteine. Cys27 carries the S-diacylglycerol cysteine lipid modification.

Belongs to the LolB family. As to quaternary structure, monomer.

Its subcellular location is the cell outer membrane. Plays a critical role in the incorporation of lipoproteins in the outer membrane after they are released by the LolA protein. In Francisella tularensis subsp. novicida (strain U112), this protein is Outer-membrane lipoprotein LolB.